We begin with the raw amino-acid sequence, 385 residues long: Serine/threonine-protein kinase 52 (385 aa).

Positions 82–356 (LIIKTVLARG…PEMDEVVPML (275 aa)) constitute a Protein kinase domain. Residues 88–96 (LARGTFGTV) and Lys-109 contribute to the ATP site. Asp-227 serves as the catalytic Proton acceptor.

It belongs to the protein kinase superfamily. Ser/Thr protein kinase family. In terms of assembly, binds to CBC1. Associates with PHOT1, PHOT2, BLUS1 and PM H(+)-ATPase (e.g. AHA1). Post-translationally, autophosphorylated. Phosphorylated by HT1 in response to low CO(2) concentrations. As to expression, expressed in guard cells.

The protein resides in the cytoplasm. It is found in the cytosol. It catalyses the reaction L-seryl-[protein] + ATP = O-phospho-L-seryl-[protein] + ADP + H(+). The catalysed reaction is L-threonyl-[protein] + ATP = O-phospho-L-threonyl-[protein] + ADP + H(+). In terms of biological role, serine/threonine protein kinase that phosphorylates proteins on serine and threonine residues. Collectively with CBC1, acts as a negative regulator of stomatal opening, probably via the inhibition of plasma membrane-type ATPases (AHA1 and AHA2) activity in guard cells, but in an abscisic acid (ABA)-independent manner. However, at low concentrations of CO(2), together with CBC1, stimulates stomatal opening via the inhibition of S-type anion channels in response to blue light (BL) and red light (RL), thus being a key component to maximize photosynthesis in the light under low CO(2) conditions. Required for temperature decrease in leaves. Downstream target of HIGH LEAF TEMPERATURE1 (HT1) during low CO(2)-induced stomatal opening. In Arabidopsis thaliana (Mouse-ear cress), this protein is Serine/threonine-protein kinase 52.